The following is a 396-amino-acid chain: 1-deoxy-D-xylulose 5-phosphate reductoisomerase (396 aa).

NADPH is bound by residues Thr-10, Gly-11, Ser-12, Ile-13, Asn-38, and Asn-123. Lys-124 lines the 1-deoxy-D-xylulose 5-phosphate pocket. Glu-125 is a binding site for NADPH. Asp-149 lines the Mn(2+) pocket. 1-deoxy-D-xylulose 5-phosphate is bound by residues Ser-150, Glu-151, Ser-185, and His-208. Position 151 (Glu-151) interacts with Mn(2+). Residue Gly-214 participates in NADPH binding. Ser-221, Asn-226, Lys-227, and Glu-230 together coordinate 1-deoxy-D-xylulose 5-phosphate. Glu-230 is a Mn(2+) binding site.

The protein belongs to the DXR family. Mg(2+) is required as a cofactor. It depends on Mn(2+) as a cofactor.

The enzyme catalyses 2-C-methyl-D-erythritol 4-phosphate + NADP(+) = 1-deoxy-D-xylulose 5-phosphate + NADPH + H(+). The protein operates within isoprenoid biosynthesis; isopentenyl diphosphate biosynthesis via DXP pathway; isopentenyl diphosphate from 1-deoxy-D-xylulose 5-phosphate: step 1/6. In terms of biological role, catalyzes the NADPH-dependent rearrangement and reduction of 1-deoxy-D-xylulose-5-phosphate (DXP) to 2-C-methyl-D-erythritol 4-phosphate (MEP). This Shewanella pealeana (strain ATCC 700345 / ANG-SQ1) protein is 1-deoxy-D-xylulose 5-phosphate reductoisomerase.